We begin with the raw amino-acid sequence, 440 residues long: Putative F-box/LRR-repeat protein At5g15620 (440 aa).

Residues 1–52 enclose the F-box domain; that stretch reads MDRFSNLPDDVIYHIVSFLSAKEATCLKFVSKNFQNLVTIKRNVVFHHWESF. 7 LRR repeats span residues 4–31, 126–153, 156–181, 194–205, 210–235, 264–289, and 318–343; these read FSNLPDDVIYHIVSFLSAKEATCLKFVS, LKLGCGFVIDILPKNALLPALKTLILDS, FYASDGCAFTRLLSASPVLEELVIDR, SSPTLKRLTLRR, PEPETWTDFESVSFDTPSLAYLKYKD, YWLNRSADPSNLIRGLKNVEILSIKV, and EADFCWDPLQILLEKSPNLKTLTIEG.

The sequence is that of Putative F-box/LRR-repeat protein At5g15620 from Arabidopsis thaliana (Mouse-ear cress).